Reading from the N-terminus, the 331-residue chain is MSDALIATSSEAPQSPAEQYDPTRKQKSADKTARIPIKIVPAEKLKKPDWIRVKAATGSSRFYEIKDILRANNLVTVCEEASCPNIGECFGKGTATFMIMGDKCTRRCPFCDVGHGRPDPLDVNEPGNLARTIAQLKLNYVVITSVDRDDLRDGGAQHYVDCISQTRELSPATRIEVLVPDFRGRLDKALDILQACPPDVMNHNMETVPRLYKQARPGADYEHSLKLLQEFKRRNPNVPTKSGLMVGLGETDEEILEVMRDMRAHDIDMLTIGQYLAPSNHHLPVLRYVHPDTFKMFEEEAYKMGFTHAAVGAMVRSSYHADQQAHQAGFA.

The segment at 1 to 33 is disordered; that stretch reads MSDALIATSSEAPQSPAEQYDPTRKQKSADKTA. Residues 7–17 show a composition bias toward polar residues; the sequence is ATSSEAPQSPA. Positions 21–33 are enriched in basic and acidic residues; it reads DPTRKQKSADKTA. [4Fe-4S] cluster contacts are provided by cysteine 78, cysteine 83, cysteine 89, cysteine 104, cysteine 108, cysteine 111, and serine 318. The Radical SAM core domain occupies 89–307; sequence CFGKGTATFM…EEEAYKMGFT (219 aa).

Belongs to the radical SAM superfamily. Lipoyl synthase family. [4Fe-4S] cluster is required as a cofactor.

It is found in the cytoplasm. The catalysed reaction is [[Fe-S] cluster scaffold protein carrying a second [4Fe-4S](2+) cluster] + N(6)-octanoyl-L-lysyl-[protein] + 2 oxidized [2Fe-2S]-[ferredoxin] + 2 S-adenosyl-L-methionine + 4 H(+) = [[Fe-S] cluster scaffold protein] + N(6)-[(R)-dihydrolipoyl]-L-lysyl-[protein] + 4 Fe(3+) + 2 hydrogen sulfide + 2 5'-deoxyadenosine + 2 L-methionine + 2 reduced [2Fe-2S]-[ferredoxin]. It functions in the pathway protein modification; protein lipoylation via endogenous pathway; protein N(6)-(lipoyl)lysine from octanoyl-[acyl-carrier-protein]: step 2/2. In terms of biological role, catalyzes the radical-mediated insertion of two sulfur atoms into the C-6 and C-8 positions of the octanoyl moiety bound to the lipoyl domains of lipoate-dependent enzymes, thereby converting the octanoylated domains into lipoylated derivatives. This is Lipoyl synthase from Cupriavidus necator (strain ATCC 17699 / DSM 428 / KCTC 22496 / NCIMB 10442 / H16 / Stanier 337) (Ralstonia eutropha).